The chain runs to 51 residues: UPF0320 protein YOL166W-A (51 aa).

The protein belongs to the UPF0320 family.

The sequence is that of UPF0320 protein YOL166W-A from Saccharomyces cerevisiae (strain ATCC 204508 / S288c) (Baker's yeast).